Reading from the N-terminus, the 167-residue chain is Golgin subfamily A member 7B (167 aa).

2 S-palmitoyl cysteine lipidation sites follow: Cys78 and Cys81. The disordered stretch occupies residues 140 to 167; that stretch reads RCSSGSSSSGSSSGSGSSSAGGGGAGAR. Over residues 142-157 the composition is skewed to low complexity; sequence SSGSSSSGSSSGSGSS. A compositionally biased stretch (gly residues) spans 158-167; it reads SAGGGGAGAR.

The protein belongs to the ERF4 family. Post-translationally, palmitoylated by ZDHHC5. Palmitoylation is required for the maintenance of ZDHHC5 at the plasma membrane.

It is found in the cell membrane. Its subcellular location is the golgi apparatus membrane. In terms of biological role, play a role in cell adhesion by regulating the plasma membrane localization of the palmitoyltransferase ZDHHC5. May be involved in protein transport from Golgi to cell surface. This Mus musculus (Mouse) protein is Golgin subfamily A member 7B (GOLGA7B).